The following is a 314-amino-acid chain: WD repeat domain-containing protein 83 (314 aa).

7 WD repeats span residues 23–62, 65–104, 107–146, 151–188, 189–228, 231–272, and 275–313; these read CNQG…LLKT, GHGY…VVRK, GHAG…PDAI, EAKD…MCAD, YLGS…LLGE, GHQN…LVLK, and VGKA…EEGG.

The protein belongs to the WD repeat MORG1 family.

The protein resides in the cytoplasm. In terms of biological role, molecular scaffold protein for various multimeric protein complexes. Acts as a module in the assembly of a multicomponent scaffold for the ERK pathway, linking ERK responses to specific agonists. Also involved in response to hypoxia by acting as a negative regulator of HIF1A/HIF-1-alpha. This chain is WD repeat domain-containing protein 83 (wdr83), found in Xenopus laevis (African clawed frog).